Consider the following 150-residue polypeptide: Ribosome-binding factor A (150 aa).

Residues 131–150 (LSHDDDEDGGADEAPRNGDE) are disordered.

The protein belongs to the RbfA family. Monomer. Binds 30S ribosomal subunits, but not 50S ribosomal subunits or 70S ribosomes.

It localises to the cytoplasm. In terms of biological role, one of several proteins that assist in the late maturation steps of the functional core of the 30S ribosomal subunit. Associates with free 30S ribosomal subunits (but not with 30S subunits that are part of 70S ribosomes or polysomes). Required for efficient processing of 16S rRNA. May interact with the 5'-terminal helix region of 16S rRNA. This is Ribosome-binding factor A from Brucella melitensis biotype 2 (strain ATCC 23457).